A 121-amino-acid chain; its full sequence is Flagellar protein FliT (121 aa).

Residues 1–50 (MNHAPHLYFAWQQLVEKSQLMLRLATEEQWDELIASEMAYVNAVQEIAHL) are required for homodimerization. Positions 60-98 (MQEQLRPMLRLILDNESKVKQLLQIRMDELAKLVGQSSV) are fliD binding.

It belongs to the FliT family. In terms of assembly, homodimer. Interacts with FliD and FlhC.

The protein localises to the cytoplasm. The protein resides in the cytosol. Its function is as follows. Dual-function protein that regulates the transcription of class 2 flagellar operons and that also acts as an export chaperone for the filament-capping protein FliD. As a transcriptional regulator, acts as an anti-FlhDC factor; it directly binds FlhC, thus inhibiting the binding of the FlhC/FlhD complex to class 2 promoters, resulting in decreased expression of class 2 flagellar operons. As a chaperone, effects FliD transition to the membrane by preventing its premature polymerization, and by directing it to the export apparatus. The sequence is that of Flagellar protein FliT from Escherichia coli O139:H28 (strain E24377A / ETEC).